The following is a 274-amino-acid chain: Shikimate kinase (274 aa).

Position 86–96 (86–96 (PVGKGLKSSSA)) interacts with ATP.

It belongs to the GHMP kinase family. Archaeal shikimate kinase subfamily.

It localises to the cytoplasm. The catalysed reaction is shikimate + ATP = 3-phosphoshikimate + ADP + H(+). The protein operates within metabolic intermediate biosynthesis; chorismate biosynthesis; chorismate from D-erythrose 4-phosphate and phosphoenolpyruvate: step 5/7. In Pyrococcus abyssi (strain GE5 / Orsay), this protein is Shikimate kinase (aroK).